The primary structure comprises 136 residues: Holo-[acyl-carrier-protein] synthase (136 aa).

Mg(2+) is bound by residues Asp-8 and Glu-57.

This sequence belongs to the P-Pant transferase superfamily. AcpS family. Requires Mg(2+) as cofactor.

Its subcellular location is the cytoplasm. The enzyme catalyses apo-[ACP] + CoA = holo-[ACP] + adenosine 3',5'-bisphosphate + H(+). Transfers the 4'-phosphopantetheine moiety from coenzyme A to a Ser of acyl-carrier-protein. The protein is Holo-[acyl-carrier-protein] synthase of Methylorubrum extorquens (strain CM4 / NCIMB 13688) (Methylobacterium extorquens).